The following is a 467-amino-acid chain: Immunoglobulin superfamily member 21 (467 aa).

Residues 1-24 form the signal peptide; that stretch reads MRTAPSLRRCVCLLLAAILDLARG. One can recognise an Ig-like 1 domain in the interval 25–132; sequence YLTVNIEPLP…RATREKVVLA (108 aa). C46 and C116 are oxidised to a cystine. N82 and N165 each carry an N-linked (GlcNAc...) asparagine glycan. Residues 229-259 are disordered; the sequence is LSLLDAENRGGRPYTERPSRGLTPDPNILLQ. Over residues 234–247 the composition is skewed to basic and acidic residues; that stretch reads AENRGGRPYTERPS. In terms of domain architecture, Ig-like 2 spans 344–429; the sequence is PKIVMTPSRA…GSTDTHTRLI (86 aa). N407 and N444 each carry an N-linked (GlcNAc...) asparagine glycan.

In terms of assembly, interacts (Ig-like 1 domain) with NRXN2 (via Laminin G-like 1 domain) in a trans-interaction manner.

The protein resides in the postsynaptic cell membrane. Functionally, involved in synaptic inhibition in the brain. Selectively regulates inhibitory presynaptic differentiation through interacting with presynaptic NRXN2. The protein is Immunoglobulin superfamily member 21 of Homo sapiens (Human).